The primary structure comprises 137 residues: Large ribosomal subunit protein uL16 (137 aa).

This sequence belongs to the universal ribosomal protein uL16 family. As to quaternary structure, part of the 50S ribosomal subunit.

Functionally, binds 23S rRNA and is also seen to make contacts with the A and possibly P site tRNAs. The polypeptide is Large ribosomal subunit protein uL16 (Azotobacter vinelandii (strain DJ / ATCC BAA-1303)).